A 1027-amino-acid polypeptide reads, in one-letter code: uncharacterized protein (1027 aa).

This is an uncharacterized protein from Colorado tick fever virus (strain USA/Florio N-7180) (CTFV).